A 202-amino-acid polypeptide reads, in one-letter code: Protein-methionine-sulfoxide reductase heme-binding subunit MsrQ (202 aa).

Transmembrane regions (helical) follow at residues 8-28, 42-62, 75-95, 110-130, 147-167, and 169-189; these read LAVF…AWIF, LGLG…LQKL, LGLW…VFIL, PYII…ITSN, LVYL…RADL, and EWTL…PSIA.

Belongs to the MsrQ family. As to quaternary structure, heterodimer of a catalytic subunit (MsrP) and a heme-binding subunit (MsrQ). FMN is required as a cofactor. It depends on heme b as a cofactor.

The protein resides in the cell inner membrane. Part of the MsrPQ system that repairs oxidized periplasmic proteins containing methionine sulfoxide residues (Met-O), using respiratory chain electrons. Thus protects these proteins from oxidative-stress damage caused by reactive species of oxygen and chlorine generated by the host defense mechanisms. MsrPQ is essential for the maintenance of envelope integrity under bleach stress, rescuing a wide series of structurally unrelated periplasmic proteins from methionine oxidation. MsrQ provides electrons for reduction to the reductase catalytic subunit MsrP, using the quinone pool of the respiratory chain. The polypeptide is Protein-methionine-sulfoxide reductase heme-binding subunit MsrQ (Pseudomonas aeruginosa (strain LESB58)).